Consider the following 30-residue polypeptide: GDDVKSACCDTCLCTKSNPPTCRCVDVGET.

Disulfide bonds link Cys-9–Cys-24 and Cys-14–Cys-22.

In terms of biological role, inhibits trypsin (IC(50)=4.90 nM) and, to a lesser extent, alpha-chymotrypsin (IC(50)=1.87 uM). The sequence is that of Bowman-Birk type proteinase inhibitor 3 from Lathyrus sativus (White vetchling).